The primary structure comprises 210 residues: Synaptosomal-associated protein 25 (210 aa).

Positions 1–23 (MENSVENSMDPRSEQEEMQRCAD) are disordered. A compositionally biased stretch (basic and acidic residues) spans 9–20 (MDPRSEQEEMQR). T-SNARE coiled-coil homology domains lie at 23–85 (DQIT…LSDL) and 147–209 (DARE…ATKM).

Belongs to the SNAP-25 family.

The protein localises to the synapse. It localises to the synaptosome. It is found in the cell membrane. May play an important role in the synaptic function of specific neuronal systems. Associates with proteins involved in vesicle docking and membrane fusion. This is Synaptosomal-associated protein 25 (snap25) from Torpedo marmorata (Marbled electric ray).